The chain runs to 254 residues: Long form salivary protein D7LC (254 aa).

An N-terminal signal peptide occupies residues 1 to 19 (MNAVITSLLFLSLVGLGYS). Intrachain disulfides connect cysteine 36–cysteine 66 and cysteine 62–cysteine 112. Tryptophan 49 serves as a coordination point for thromboxane A2. Residue tryptophan 52 participates in leukotriene C4 binding. Position 63 (tyrosine 63) interacts with thromboxane A2. Glycine 136 and lysine 154 together coordinate leukotriene C4. Lysine 154 contributes to the thromboxane A2 binding site. 3 disulfide bridges follow: cysteine 162–cysteine 178, cysteine 174–cysteine 221, and cysteine 211–cysteine 230.

Belongs to the PBP/GOBP family.

The protein localises to the secreted. Functionally, modulates blood feeding of female sandflies on vertebrate species by binding and sequestering different mediators involved in the host response. Binds leukotriene C4, leukotriene D4, leukotriene E4 and U-46619, a stable analog of thromboxane A2. Does not bind histamine or serotonin. Inhibits platelet aggregation induced by low concentrations of collagen in thromboxane A2-dependent manner. This Phlebotomus papatasi (Sandfly) protein is Long form salivary protein D7LC.